The chain runs to 497 residues: Proline--tRNA ligase (497 aa).

Belongs to the class-II aminoacyl-tRNA synthetase family. ProS type 3 subfamily. In terms of assembly, homodimer.

It localises to the cytoplasm. It carries out the reaction tRNA(Pro) + L-proline + ATP = L-prolyl-tRNA(Pro) + AMP + diphosphate. Functionally, catalyzes the attachment of proline to tRNA(Pro) in a two-step reaction: proline is first activated by ATP to form Pro-AMP and then transferred to the acceptor end of tRNA(Pro). The sequence is that of Proline--tRNA ligase from Bacteroides fragilis (strain ATCC 25285 / DSM 2151 / CCUG 4856 / JCM 11019 / LMG 10263 / NCTC 9343 / Onslow / VPI 2553 / EN-2).